The sequence spans 879 residues: Valine--tRNA ligase (879 aa).

Residues 45–55 (PNVTGKLHLGH) carry the 'HIGH' region motif. The 'KMSKS' region motif lies at 521–525 (KMSKS). Position 524 (lysine 524) interacts with ATP. Positions 806–879 (LTELVNVDEE…ERIQDLKESK (74 aa)) form a coiled coil.

The protein belongs to the class-I aminoacyl-tRNA synthetase family. ValS type 1 subfamily. Monomer.

The protein resides in the cytoplasm. The enzyme catalyses tRNA(Val) + L-valine + ATP = L-valyl-tRNA(Val) + AMP + diphosphate. Catalyzes the attachment of valine to tRNA(Val). As ValRS can inadvertently accommodate and process structurally similar amino acids such as threonine, to avoid such errors, it has a 'posttransfer' editing activity that hydrolyzes mischarged Thr-tRNA(Val) in a tRNA-dependent manner. The chain is Valine--tRNA ligase from Lactobacillus acidophilus (strain ATCC 700396 / NCK56 / N2 / NCFM).